A 290-amino-acid polypeptide reads, in one-letter code: Membrane protein insertase YidC 1 (290 aa).

Residues 1-19 form the signal peptide; the sequence is MKKKALLPLFLGIMIFLAG. Cysteine 20 is lipidated: N-palmitoyl cysteine. Cysteine 20 carries the S-diacylglycerol cysteine lipid modification. The next 5 helical transmembrane spans lie at 56-76, 134-154, 176-196, 211-231, and 232-252; these read FGLAIIVLVLFIRLILLPFML, MLGCLPILIQMPIIMGLYFVL, PDIWITVIAGVLYFIQAVVSS, MVISPIMIIWISLQASSALGL, and YWSVSALFLVIQTHFANIYYS. The interval 270-290 is disordered; that stretch reads HNPYSKKKGKNTQVVSKKNKK. Residues 280-290 are compositionally biased toward polar residues; it reads NTQVVSKKNKK.

The protein belongs to the OXA1/ALB3/YidC family. Type 2 subfamily.

Its subcellular location is the cell membrane. Functionally, required for the insertion and/or proper folding and/or complex formation of integral membrane proteins into the membrane. Involved in integration of membrane proteins that insert both dependently and independently of the Sec translocase complex, as well as at least some lipoproteins. In Staphylococcus epidermidis (strain ATCC 12228 / FDA PCI 1200), this protein is Membrane protein insertase YidC 1.